The primary structure comprises 369 residues: Nuclear pore complex-interacting protein family member A7 (369 aa).

The interval 151–171 (SMKEREHREEERQVSEAEENG) is disordered.

The protein belongs to the NPIP family.

This chain is Nuclear pore complex-interacting protein family member A7 (NPIPA7), found in Homo sapiens (Human).